The sequence spans 585 residues: Suppressor of mec-8 and unc-52 protein homolog 2 (585 aa).

A compositionally biased stretch (basic residues) spans 1 to 14 (MKPSKSHHKEKTAR). 2 disordered regions span residues 1–52 (MKPS…SSFH) and 219–324 (KKKK…PRDK). Positions 15–39 (RREEKLEESDNPKYRDRAKERRENQ) are enriched in basic and acidic residues. 4 R-[ED] repeats span residues 16–17 (RE), 29–30 (RD), 36–37 (RE), and 258–259 (RE). Basic and acidic residues predominate over residues 276–288 (LSTKQEEPPVART). R-[ED] repeat units lie at residues 322–323 (RD), 436–437 (RD), 445–446 (RE), 450–451 (RE), 540–541 (RD), and 542–543 (RD). A disordered region spans residues 523 to 585 (FQFGVKMQDG…EAQTPKRSKH (63 aa)). Basic and acidic residues predominate over residues 530–548 (QDGRKTRKQNRDRDQKLNN). A Phosphothreonine modification is found at Thr-579.

The protein belongs to the RED family. In terms of assembly, component of the spliceosome. Interacts with SMU1. In terms of tissue distribution, highly expressed in seedlings at 7 days after germination, young flowers before anthesis and developing siliques. Expressed at lower levels in roots, expanding leaves, open flowers, dry seeds and inflorescences. Not detected in senescing leaves.

The protein localises to the nucleus. Auxiliary spliceosomal protein involved in splicing of specific pre-mRNAs that affect multiple aspects of development. The sequence is that of Suppressor of mec-8 and unc-52 protein homolog 2 (SMU2) from Arabidopsis thaliana (Mouse-ear cress).